The following is a 279-amino-acid chain: Single-strand selective monofunctional uracil DNA glycosylase (279 aa).

3 residues coordinate substrate: methionine 86, phenylalanine 100, and asparagine 165. Residues 175–189 (SGRNLTPAELPAKQR) are DNA-binding. Histidine 241 contacts substrate.

It belongs to the uracil-DNA glycosylase (UDG) superfamily. SMUG1 family.

It is found in the nucleus. Recognizes base lesions in the genome and initiates base excision DNA repair. Acts as a monofunctional DNA glycosylase specific for uracil (U) residues in DNA with a preference for single-stranded DNA substrates. The activity is greater toward mismatches (U/G) compared to matches (U/A). Excises uracil (U), 5-formyluracil (fU) and uracil derivatives bearing an oxidized group at C5 [5-hydroxyuracil (hoU) and 5-hydroxymethyluracil (hmU)] in ssDNA and dsDNA, but not analogous cytosine derivatives (5-hydroxycytosine and 5-formylcytosine), nor other oxidized bases. The activity is damage-specific and salt-dependent. The substrate preference is the following: ssDNA &gt; dsDNA (G pair) = dsDNA (A pair) at low salt concentration, and dsDNA (G pair) &gt; dsDNA (A pair) &gt; ssDNA at high salt concentration. The polypeptide is Single-strand selective monofunctional uracil DNA glycosylase (Smug1) (Mus musculus (Mouse)).